A 743-amino-acid chain; its full sequence is Putative metallophosphoesterase At3g03305 (743 aa).

Residues 1-40 (MESIGDDDELRSKTVSLPRRISFTILLLLLLISLSTRVSG) form the signal peptide. D66, H68, and D101 together coordinate a divalent metal cation. Transmembrane regions (helical) follow at residues 514 to 534 (ILWP…CIII), 565 to 585 (MPVV…FPWF), 623 to 643 (VMVV…LVVC), 687 to 704 (LFRK…WKHF), and 716 to 736 (MNVV…LYVI).

Belongs to the metallophosphoesterase superfamily. It depends on a divalent metal cation as a cofactor.

It is found in the membrane. This is Putative metallophosphoesterase At3g03305 from Arabidopsis thaliana (Mouse-ear cress).